Reading from the N-terminus, the 73-residue chain is Defensin-like protein 87 (73 aa).

The N-terminal stretch at Met1–Gly27 is a signal peptide. 3 disulfides stabilise this stretch: Cys33-Cys71, Cys45-Cys69, and Cys49-Cys70.

The protein belongs to the DEFL family.

Its subcellular location is the secreted. The chain is Defensin-like protein 87 from Arabidopsis thaliana (Mouse-ear cress).